The chain runs to 113 residues: ATP-dependent Clp protease adapter protein ClpS (113 aa).

Positions 1-11 (MHRDLHMMSDR) are enriched in basic and acidic residues. The interval 1-25 (MHRDLHMMSDRSEDDGDTSILTATK) is disordered.

It belongs to the ClpS family. In terms of assembly, binds to the N-terminal domain of the chaperone ClpA.

Involved in the modulation of the specificity of the ClpAP-mediated ATP-dependent protein degradation. The chain is ATP-dependent Clp protease adapter protein ClpS from Roseobacter denitrificans (strain ATCC 33942 / OCh 114) (Erythrobacter sp. (strain OCh 114)).